The chain runs to 266 residues: Gap junction beta-4 protein (266 aa).

An intramembrane segment occupies 2 to 13; it reads NWGFLQGILSGV. Residues 14 to 20 lie on the Cytoplasmic side of the membrane; that stretch reads NKYSTAL. The chain crosses the membrane as a helical span at residues 21 to 40; it reads GRIWLSVVFIFRVLVYVVAA. At 41–73 the chain is on the extracellular side; sequence EEVWDDDQKDFICNTKQPGCPNVCYDEFFPVSH. Cystine bridges form between C53–C175, C60–C169, and C64–C164. Residues 74–94 traverse the membrane as a helical segment; it reads VRLWALQLILVTCPSLLVVMH. Residues 95-130 are Cytoplasmic-facing; that stretch reads VAYREERERKHRLKHGPNAPALYSNLSKKRGGLWWT. The chain crosses the membrane as a helical span at residues 131–151; the sequence is YLLSLIFKAAVDSGFLYIFHC. Topologically, residues 152 to 184 are extracellular; it reads IYKDYDMPRVVACSVTPCPHTVDCYIARPTEKK. A helical membrane pass occupies residues 185-205; the sequence is VFTYFMVVTAAICILLNLSEV. The Cytoplasmic portion of the chain corresponds to 206 to 266; it reads VYLVGKRCME…MATVDAGVYP (61 aa).

Belongs to the connexin family. Beta-type (group I) subfamily. As to quaternary structure, a hemichannel or connexon is composed of a hexamer of connexins. A functional gap junction is formed by the apposition of two hemichannels. Forms heteromeric channels with GJB2. Detected in cochlea (at protein level). Detected in cochlea. Expressed in skin.

The protein resides in the cell membrane. It is found in the cell junction. The protein localises to the gap junction. In terms of biological role, structural component of gap junctions. Gap junctions are dodecameric channels that connect the cytoplasm of adjoining cells. They are formed by the docking of two hexameric hemichannels, one from each cell membrane. Small molecules and ions diffuse from one cell to a neighboring cell via the central pore. The sequence is that of Gap junction beta-4 protein (Gjb4) from Mus musculus (Mouse).